The primary structure comprises 419 residues: UPF0761 membrane protein ACIAD3168 (419 aa).

6 helical membrane passes run 42 to 62, 105 to 125, 148 to 168, 186 to 206, 212 to 232, and 252 to 272; these read ALTYTTLFAVVPMLTVFLVII, LTVIGILFLFVTTVMMLSTIE, WTIISLGPIILGSAFVISSTV, AFILWLISFGLTILGFFILYW, TVPMYAAIIAACFSAAIFELL, and AFAAIPIFLLWIFLSWNIVLL.

It belongs to the UPF0761 family.

Its subcellular location is the cell inner membrane. The polypeptide is UPF0761 membrane protein ACIAD3168 (Acinetobacter baylyi (strain ATCC 33305 / BD413 / ADP1)).